The following is a 555-amino-acid chain: Developmental regulatory protein wetA (555 aa).

Disordered stretches follow at residues 113–171, 250–310, 419–488, and 508–531; these read TGHS…LMRS, QSPA…SESL, TQAV…RGGK, and GVAP…RRRK. Composition is skewed to polar residues over residues 162-171, 259-281, 293-310, 419-431, and 464-488; these read QSFSPGLMRS, PSAN…SALT, SPHS…SESL, TQAV…SPSI, and SGQS…RGGK.

It belongs to the wetA family.

Functionally, brlA, abaA and wetA are pivotal regulators of conidiophore development and conidium maturation. They act individually and together to regulate their own expression and that of numerous other sporulation-specific genes. Responsible for activating a set of genes whose products make up the final two conidial wall layers or direct their assembly and, through this activity, is responsible for acquisition of spore dormancy. This chain is Developmental regulatory protein wetA, found in Emericella nidulans (strain FGSC A4 / ATCC 38163 / CBS 112.46 / NRRL 194 / M139) (Aspergillus nidulans).